Reading from the N-terminus, the 182-residue chain is ATP-dependent protease subunit HslV (182 aa).

T6 is a catalytic residue. Residues A164, C167, and T170 each contribute to the Na(+) site.

This sequence belongs to the peptidase T1B family. HslV subfamily. A double ring-shaped homohexamer of HslV is capped on each side by a ring-shaped HslU homohexamer. The assembly of the HslU/HslV complex is dependent on binding of ATP.

It is found in the cytoplasm. It catalyses the reaction ATP-dependent cleavage of peptide bonds with broad specificity.. Allosterically activated by HslU binding. Functionally, protease subunit of a proteasome-like degradation complex believed to be a general protein degrading machinery. This Borrelia garinii subsp. bavariensis (strain ATCC BAA-2496 / DSM 23469 / PBi) (Borreliella bavariensis) protein is ATP-dependent protease subunit HslV.